The chain runs to 324 residues: 2,3,4,5-tetrahydropyridine-2,6-dicarboxylate N-succinyltransferase (324 aa).

Mg(2+) contacts are provided by D173 and E190. E206 (acyl-anhydride intermediate) is an active-site residue. Succinyl-CoA contacts are provided by residues R208, G223, S226, A249, 264–265 (EA), G272, K284, and 297–300 (RRNS).

This sequence belongs to the type 2 tetrahydrodipicolinate N-succinyltransferase family. In terms of assembly, homotrimer.

The protein resides in the cytoplasm. The catalysed reaction is (S)-2,3,4,5-tetrahydrodipicolinate + succinyl-CoA + H2O = (S)-2-succinylamino-6-oxoheptanedioate + CoA. It participates in amino-acid biosynthesis; L-lysine biosynthesis via DAP pathway; LL-2,6-diaminopimelate from (S)-tetrahydrodipicolinate (succinylase route): step 1/3. Its function is as follows. Catalyzes the conversion of the cyclic tetrahydrodipicolinate (THDP) into the acyclic N-succinyl-L-2-amino-6-oxopimelate using succinyl-CoA. The sequence is that of 2,3,4,5-tetrahydropyridine-2,6-dicarboxylate N-succinyltransferase from Geodermatophilus obscurus (strain ATCC 25078 / DSM 43160 / JCM 3152 / CCUG 61914 / KCC A-0152 / KCTC 9177 / NBRC 13315 / NRRL B-3577 / G-20).